Consider the following 295-residue polypeptide: 4-hydroxybenzoate octaprenyltransferase (295 aa).

Transmembrane regions (helical) follow at residues Ala-28–Phe-48, Trp-51–Val-71, Ala-101–Ala-121, Ile-124–Val-144, Ile-159–Leu-179, Val-220–Leu-240, Trp-242–Ile-262, and Phe-274–Leu-294.

The protein belongs to the UbiA prenyltransferase family. The cofactor is Mg(2+).

It localises to the cell inner membrane. The catalysed reaction is all-trans-octaprenyl diphosphate + 4-hydroxybenzoate = 4-hydroxy-3-(all-trans-octaprenyl)benzoate + diphosphate. It participates in cofactor biosynthesis; ubiquinone biosynthesis. Functionally, catalyzes the prenylation of para-hydroxybenzoate (PHB) with an all-trans polyprenyl group. Mediates the second step in the final reaction sequence of ubiquinone-8 (UQ-8) biosynthesis, which is the condensation of the polyisoprenoid side chain with PHB, generating the first membrane-bound Q intermediate 3-octaprenyl-4-hydroxybenzoate. The polypeptide is 4-hydroxybenzoate octaprenyltransferase (Paracidovorax citrulli (strain AAC00-1) (Acidovorax citrulli)).